We begin with the raw amino-acid sequence, 536 residues long: Phosphoenolpyruvate carboxykinase (ATP) (536 aa).

Residues arginine 61, tyrosine 195, and lysine 201 each contribute to the substrate site. ATP is bound by residues lysine 201, histidine 220, and glycine 236 to threonine 244. 2 residues coordinate Mn(2+): lysine 201 and histidine 220. Aspartate 257 is a binding site for Mn(2+). Positions 285, 322, and 447 each coordinate ATP. A substrate-binding site is contributed by arginine 322.

It belongs to the phosphoenolpyruvate carboxykinase (ATP) family. Requires Mn(2+) as cofactor.

Its subcellular location is the cytoplasm. It carries out the reaction oxaloacetate + ATP = phosphoenolpyruvate + ADP + CO2. It participates in carbohydrate biosynthesis; gluconeogenesis. Involved in the gluconeogenesis. Catalyzes the conversion of oxaloacetate (OAA) to phosphoenolpyruvate (PEP) through direct phosphoryl transfer between the nucleoside triphosphate and OAA. The chain is Phosphoenolpyruvate carboxykinase (ATP) from Brucella anthropi (strain ATCC 49188 / DSM 6882 / CCUG 24695 / JCM 21032 / LMG 3331 / NBRC 15819 / NCTC 12168 / Alc 37) (Ochrobactrum anthropi).